We begin with the raw amino-acid sequence, 2837 residues long: Probable polyketide synthase 3 (2837 aa).

Residues 39-464 (NNGIGIIGIG…GSNVCIILKD (426 aa)) enclose the Ketosynthase family 3 (KS3) domain. Active-site for beta-ketoacyl synthase activity residues include cysteine 209, histidine 348, and histidine 388. The interval 664-697 (GIKPTFIVGHSLGEVTAAYCSGMIDLETECYLIY) is acyl/malonyl transferase. Catalysis depends on serine 674, which acts as the For acyl/malonyl transferase activity. The tract at residues 962 to 1084 (IDILGNSITD…GNFQLFKHNG (123 aa)) is N-terminal hotdog fold. Residues 962-1255 (IDILGNSITD…CTSLTPIQDS (294 aa)) enclose the PKS/mFAS DH domain. Residue histidine 995 is the Proton acceptor; for dehydratase activity of the active site. The interval 1106-1255 (NLTKLTKEDL…CTSLTPIQDS (150 aa)) is C-terminal hotdog fold. The active-site Proton donor; for dehydratase activity is aspartate 1169. Positions 2330–2407 (DNKNSVNQMF…SSIKIITNSL (78 aa)) constitute a Carrier domain. At serine 2367 the chain carries O-(pantetheine 4'-phosphoryl)serine. Residues 2464–2484 (KVILLSGSTGFLGGYLLLNLV) traverse the membrane as a helical segment.

Pantetheine 4'-phosphate serves as cofactor.

It is found in the membrane. Its function is as follows. Probable polyketide synthase. The chain is Probable polyketide synthase 3 (pks3) from Dictyostelium discoideum (Social amoeba).